Consider the following 31-residue polypeptide: Nemertide alpha-2 (31 aa).

Disulfide bonds link C2–C16, C9–C20, and C15–C26. 4-hydroxyproline is present on residues P28 and P29.

The protein belongs to the nemertide family. In terms of tissue distribution, confined to the epidermis and to the mucus layer.

It localises to the secreted. In terms of biological role, toxin with similar potency against both insect and mammalian sodium channels (Nav). Delays the inactivation of most Nav channels tested (B.germanica (BgNav1); EC(50)=87.2 nM, human Nav1.1/SCN1A; EC(50)=125.8 nM, rat Nav1.2/SCN2A; EC(50)=97.9 nM, rat Nav1.3/SCN3A; EC(50)=127.7 nM, rat Nav1.4/SCN4A; EC(50)=1150.3 nM, human Nav1.5/SCN5A; EC(50)=149.2 nM, mouse Nav1.6/SCN8A; EC(50)=1361.8 nM, human Nav1.9/SCN9A; EC(50)=1296.7 nM). Inactivation is completely prevented by a concentration of 1 uM, resulting in sustained, non-inactivating current. In addition, the toxin significantly enhances the recovery from inactivation, and the open state is not required for the toxin to interact with the channel. In vivo, injection into brine shrimp (Artemia salina) stops movement or causes death after 24 hours (EC(50)=2.9 uM). This Lineus longissimus (Bootlace worm) protein is Nemertide alpha-2.